Here is a 514-residue protein sequence, read N- to C-terminus: Histidine ammonia-lyase (514 aa).

The segment at residues 143–145 (CSG) is a cross-link (5-imidazolinone (Cys-Gly)). Serine 144 carries the post-translational modification 2,3-didehydroalanine (Ser).

This sequence belongs to the PAL/histidase family. Contains an active site 4-methylidene-imidazol-5-one (MIO), which is formed autocatalytically by cyclization and dehydration of residues Cys-Ser-Gly.

The protein resides in the cytoplasm. It carries out the reaction L-histidine = trans-urocanate + NH4(+). Its pathway is amino-acid degradation; L-histidine degradation into L-glutamate; N-formimidoyl-L-glutamate from L-histidine: step 1/3. The protein is Histidine ammonia-lyase (hutH) of Streptomyces griseus.